The chain runs to 67 residues: MPKLKTNRAAAKRFKFTKNNKIKRKSMNTRHILTKKGPKRRRRLRGLTLVNNSDWKSIVRLMPYGVR.

The protein belongs to the bacterial ribosomal protein bL35 family.

The sequence is that of Large ribosomal subunit protein bL35 from Leptospira borgpetersenii serovar Hardjo-bovis (strain JB197).